Here is a 318-residue protein sequence, read N- to C-terminus: tRNA dimethylallyltransferase (318 aa).

ATP is bound at residue glycine 16–threonine 23. Threonine 18–threonine 23 contacts substrate. Interaction with substrate tRNA stretches follow at residues aspartate 41–leucine 44, glutamine 165–arginine 169, arginine 246–arginine 251, and lysine 279–arginine 286.

It belongs to the IPP transferase family. Monomer. Mg(2+) is required as a cofactor.

It catalyses the reaction adenosine(37) in tRNA + dimethylallyl diphosphate = N(6)-dimethylallyladenosine(37) in tRNA + diphosphate. Functionally, catalyzes the transfer of a dimethylallyl group onto the adenine at position 37 in tRNAs that read codons beginning with uridine, leading to the formation of N6-(dimethylallyl)adenosine (i(6)A). This is tRNA dimethylallyltransferase from Actinobacillus succinogenes (strain ATCC 55618 / DSM 22257 / CCUG 43843 / 130Z).